Reading from the N-terminus, the 457-residue chain is Argininosuccinate lyase (457 aa).

The protein belongs to the lyase 1 family. Argininosuccinate lyase subfamily.

It localises to the cytoplasm. It catalyses the reaction 2-(N(omega)-L-arginino)succinate = fumarate + L-arginine. The protein operates within amino-acid biosynthesis; L-arginine biosynthesis; L-arginine from L-ornithine and carbamoyl phosphate: step 3/3. This chain is Argininosuccinate lyase, found in Shewanella sediminis (strain HAW-EB3).